The primary structure comprises 447 residues: Cysteine--tRNA ligase (447 aa).

Cys-28 is a Zn(2+) binding site. The 'HIGH' region motif lies at 30–40 (PTVYNYIHIGN). Residues Cys-211, His-236, and Glu-240 each contribute to the Zn(2+) site. Residues 268 to 272 (KMSKS) carry the 'KMSKS' region motif. Lys-271 lines the ATP pocket.

It belongs to the class-I aminoacyl-tRNA synthetase family. As to quaternary structure, monomer. Zn(2+) serves as cofactor.

It localises to the cytoplasm. The catalysed reaction is tRNA(Cys) + L-cysteine + ATP = L-cysteinyl-tRNA(Cys) + AMP + diphosphate. The chain is Cysteine--tRNA ligase from Streptococcus pyogenes serotype M28 (strain MGAS6180).